A 123-amino-acid polypeptide reads, in one-letter code: Integration host factor subunit alpha (123 aa).

A disordered region spans residues 97 to 123 (NANGSAPSMSSSASAVDDDKSESASRT). Low complexity predominate over residues 98–111 (ANGSAPSMSSSASA). A compositionally biased stretch (basic and acidic residues) spans 113 to 123 (DDDKSESASRT).

Belongs to the bacterial histone-like protein family. Heterodimer of an alpha and a beta chain.

In terms of biological role, this protein is one of the two subunits of integration host factor, a specific DNA-binding protein that functions in genetic recombination as well as in transcriptional and translational control. The chain is Integration host factor subunit alpha from Rhodopseudomonas palustris (strain BisB5).